Consider the following 1362-residue polypeptide: DNA-directed RNA polymerase subunit beta (1362 aa).

It belongs to the RNA polymerase beta chain family. In terms of assembly, the RNAP catalytic core consists of 2 alpha, 1 beta, 1 beta' and 1 omega subunit. When a sigma factor is associated with the core the holoenzyme is formed, which can initiate transcription.

The enzyme catalyses RNA(n) + a ribonucleoside 5'-triphosphate = RNA(n+1) + diphosphate. In terms of biological role, DNA-dependent RNA polymerase catalyzes the transcription of DNA into RNA using the four ribonucleoside triphosphates as substrates. The protein is DNA-directed RNA polymerase subunit beta of Parvibaculum lavamentivorans (strain DS-1 / DSM 13023 / NCIMB 13966).